The primary structure comprises 149 residues: 3-dehydroquinate dehydratase (149 aa).

Catalysis depends on Y23, which acts as the Proton acceptor. Residues N74, H80, and D87 each coordinate substrate. H100 acts as the Proton donor in catalysis. Substrate is bound by residues 101 to 102 and R111; that span reads LS.

Belongs to the type-II 3-dehydroquinase family. In terms of assembly, homododecamer.

The catalysed reaction is 3-dehydroquinate = 3-dehydroshikimate + H2O. It participates in metabolic intermediate biosynthesis; chorismate biosynthesis; chorismate from D-erythrose 4-phosphate and phosphoenolpyruvate: step 3/7. In terms of biological role, catalyzes a trans-dehydration via an enolate intermediate. The chain is 3-dehydroquinate dehydratase from Ruegeria pomeroyi (strain ATCC 700808 / DSM 15171 / DSS-3) (Silicibacter pomeroyi).